The sequence spans 374 residues: Trehalose-phosphate phosphatase B (374 aa).

Belongs to the trehalose phosphatase family. It depends on a divalent metal cation as a cofactor. As to expression, expressed in flowers.

It catalyses the reaction alpha,alpha-trehalose 6-phosphate + H2O = alpha,alpha-trehalose + phosphate. It participates in glycan biosynthesis; trehalose biosynthesis. Functionally, removes the phosphate from trehalose 6-phosphate to produce free trehalose. Trehalose accumulation in plant may improve abiotic stress tolerance. This Arabidopsis thaliana (Mouse-ear cress) protein is Trehalose-phosphate phosphatase B (TPPB).